The chain runs to 61 residues: Small ribosomal subunit protein uS14 (61 aa).

Cys24, Cys27, Cys40, and Cys43 together coordinate Zn(2+).

Belongs to the universal ribosomal protein uS14 family. Zinc-binding uS14 subfamily. Part of the 30S ribosomal subunit. Contacts proteins S3 and S10. It depends on Zn(2+) as a cofactor.

Functionally, binds 16S rRNA, required for the assembly of 30S particles and may also be responsible for determining the conformation of the 16S rRNA at the A site. This chain is Small ribosomal subunit protein uS14, found in Nitratidesulfovibrio vulgaris (strain ATCC 29579 / DSM 644 / CCUG 34227 / NCIMB 8303 / VKM B-1760 / Hildenborough) (Desulfovibrio vulgaris).